Reading from the N-terminus, the 325-residue chain is tRNA dimethylallyltransferase (325 aa).

An ATP-binding site is contributed by 12–19; that stretch reads GPTASGKT. 14-19 is a binding site for substrate; the sequence is TASGKT. 3 interaction with substrate tRNA regions span residues 37–40, 161–165, and 244–249; these read DSAL, QRIHR, and RCVGYR.

Belongs to the IPP transferase family. As to quaternary structure, monomer. The cofactor is Mg(2+).

The enzyme catalyses adenosine(37) in tRNA + dimethylallyl diphosphate = N(6)-dimethylallyladenosine(37) in tRNA + diphosphate. Its function is as follows. Catalyzes the transfer of a dimethylallyl group onto the adenine at position 37 in tRNAs that read codons beginning with uridine, leading to the formation of N6-(dimethylallyl)adenosine (i(6)A). The protein is tRNA dimethylallyltransferase of Chromobacterium violaceum (strain ATCC 12472 / DSM 30191 / JCM 1249 / CCUG 213 / NBRC 12614 / NCIMB 9131 / NCTC 9757 / MK).